The following is a 116-amino-acid chain: Iron-sulfur cluster insertion protein ErpA (116 aa).

Cysteine 44, cysteine 108, and cysteine 110 together coordinate iron-sulfur cluster.

Belongs to the HesB/IscA family. In terms of assembly, homodimer. The cofactor is iron-sulfur cluster.

Its function is as follows. Required for insertion of 4Fe-4S clusters for at least IspG. The sequence is that of Iron-sulfur cluster insertion protein ErpA from Pseudomonas entomophila (strain L48).